The sequence spans 87 residues: Insulin-related peptide 1 (87 aa).

The first 19 residues, 1–19 (MKSFMVFVLIFACFSCYYA), serve as a signal peptide directing secretion. A propeptide spanning residues 20–44 (QESTNFYCGRTLSRALAVLCYGAES) is cleaved from the precursor. Residue R64 is modified to Arginine amide. The propeptide occupies 68 to 87 (GPVDECCEKACSIQELMTYC).

Belongs to the insulin family. DAGWWIPQHGHHALAGVR-amide: Expressed in corpora cardiaca (CC), corpora allata (CA), antennal lobe (AL) and gnathal ganglion (GNG) (at protein level). Expression in CC and CA detected in most animals, in AL and GNG in few animals (at protein level).

It is found in the secreted. This is Insulin-related peptide 1 from Agrotis ipsilon (Black cutworm moth).